Here is a 534-residue protein sequence, read N- to C-terminus: Pentatricopeptide repeat-containing protein At1g07590, mitochondrial (534 aa).

The N-terminal 20 residues, 1–20 (MRSIIALMRQREYFVQAIRR), are a transit peptide targeting the mitochondrion. PPR repeat units lie at residues 165–199 (NELL…GYRT), 200–234 (SHLV…KATP), 235–269 (HVST…GVEP), 270–300 (NEVS…IEKS), 305–335 (NWST…IRGF), 339–369 (RSKS…MKNV), 374–408 (ETEQ…GFKP), 409–443 (NSIT…KTSK), and 451–485 (WLET…KYNR).

The protein belongs to the PPR family. P subfamily.

The protein localises to the mitochondrion. The polypeptide is Pentatricopeptide repeat-containing protein At1g07590, mitochondrial (Arabidopsis thaliana (Mouse-ear cress)).